A 1953-amino-acid polypeptide reads, in one-letter code: MNPMQKKKLISIAIALTLQSYYIPAIAAENNDDEKECPSNISSLPKEKRAKLSPTCLATPENDNHWGWVAGGVAALVAGVAIGVENNGGGDSNHSYTPPKPDNGGDVTPPDDGGNVTPPDDGGNVTPPDDGGDDNVTPPDDSGDDDVAPPDDSGDDDVTPPDDSGDDDVTPPDDSGDGDVTPPDDSGDDDVTPPDDSGDDDVTPPDDSGDDDVTPPDDSGDDDVTPPDDSGDDDVTPPDDSGDDDDTPPDDSVITFSNGVTIDKGKDTLTFDSFKLDNGSVLEGAVWNYSEQDNQWQLTTADGKTLNVTGWDVTDANAAVIEGTQENGLYWKYDSRGYLIIADDNTTVISGDDQAHNSDRGMDISGQDRTGVIISGDRTVNTLTGDSSVTDGATGMVISGDGTTNTISGHSTVDNATGALISGNGTTTNFAGDIAVSGGGTAIIIDGDNATIKNTGTSDISGAGSTGTVIDGNNARVNNDGDMTITDGGTGGHITGDNVVIDNAGSTTVSGADATALYIEGDNALVINEGNQTISGGAVGTRIDGDDAHTTNTGDIAVDGAGSAAVIINGDNGSLTQAGDLLVTDGAMGIITYGTGNEAKNTGNATVRDADSVGFVVAGEKNTFKNKGDIDVSLNGTGALVSGDMSQVTLDGDINVVSVQDSEGVFSSATGVSVSGDSNAVDITGNVNISADYGQDDLAAGAPPLTGVVVGGNGNTVTLNGALNIDDNDLSATGGQYLDVVGLSVTGDDNDVEIDGGINITHSEDPLDGTSADITGISVSGNSTVTLNGHSTIDTNTVVGGHVVLARVNNGGSLILGDDSVVDVNVSYIPTGYYTYNALLMADGEGTSIENKGDITSHGVYSVIRADNGSEVSNSGDILVYATSSNSSEDRAAITRASGEGSAVHNKAGGDITLISDQTPQGSGGIEVYPLKWYTHTFYAMMASDYGDVVNDEGATIHLQGAGVYGVTASRGKALNEGNIYLDGLVPTLDDENNITSTSYWQPSSLYLTSSGMVAGSTDADGDATAINTGNITVNNAGFGMMALNGGTAINQGVITLTADDGVTGQADELVGMAALNGGVVINDTSGVINIDADYGQAFLSDSSSYIINNGSINLNGSPMDDTDSHMGGTPTDKIWIQSLPGSGDSDTRTSDTGFFTAGTLANYGTETLNGDVDVNGGWLYNEAGASLTVNGTVTINGGANALANYGTLDADAISTWHSLFNEADGSITTDLLTLNGDVTFYNNGDFTGSIAGTSYQQEIVNTGDMTVAEDGKSLVSGSFYFYNEEDATLTNSGSAVEGGENTIINLTRANDSLTQVNSGTITATNGYSAITTVNGSNDPKWIWNTATGVINGINPDAPLINLGRGYNFGNQGTINVQGDNAVAISGGTSSYVINLVNSGTINVGTEQGKEDGTNGTGLIGIKGNGNATTINNTADGVINVYADDSYAFGGKTKAIINNGEINLLCDSGCDIYAPGTTGTQNDHNGTADIVIPDATTAPTEGSIPTPPADPNAPQQLSNYIVGTNADGSSGTLKANNLVIGDNVKVDTGFTSGTADTTVVVDNAFTGSNIQGADNITSTSVVWNAQGSQDADGNVDVTMTKNAYADVATDSSVSDVAQALDAGYTNNELYTSLNVGTTAELNSALKQVSGAQATTVFREARVLSNRFTMLADAAPQIKDGLAFNVVAKGDPRAELGNDTQYDMLALRQTLDLTASQNLTLEYGIARLDGDGSKTAGDNGLTGGYSQFFGLKHSMAFDEGLAWNNSLRYDVHNLDSSRSVAYGDVNKIADSDMRQQYLEFRSEGAKTFTMMGDALKVTPYAGVKFRHTMEDGYKERSAGDFNLSMNSGNETAVDSIVGLKLDYAGKDGWSATATLEGGPNLSYSKSQRTASLQGAAGQSFGVDDGQKGGGVNGLATIGVKYSSNDTALHLDAYQWKEDGISDKGFMLNVKKTFR.

An N-terminal signal peptide occupies residues 1–27; sequence MNPMQKKKLISIAIALTLQSYYIPAIA. 3 disordered regions span residues 31–50, 88–258, and 1496–1517; these read NDDE…EKRA, GGGD…TFSN, and TTAP…PQQL. The 1; truncated repeat unit spans residues 101 to 103; sequence PDN. Positions 101–252 are 15 X 11 AA tandem repeats; that stretch reads PDNGGDVTPP…DDDDTPPDDS (152 aa). A 2; truncated repeat occupies 104 to 113; sequence GGDVTPPDDG. One copy of the 3; truncated repeat lies at 114 to 122; the sequence is GNVTPPDDG. 11 consecutive repeat copies span residues 123–133, 134–144, 145–155, 156–166, 167–177, 178–188, 189–199, 200–210, 211–221, 222–232, and 233–243. Acidic residues-rich tracts occupy residues 141–177 and 185–249; these read DSGD…DSGD and DSGD…DTPP. The 15; truncated repeat unit spans residues 244–252; it reads DDDTPPDDS. Residues 1649–1952 form the Autotransporter domain; it reads SGAQATTVFR…GFMLNVKKTF (304 aa).

The polypeptide is Putative surface-exposed virulence protein BigA (bigA) (Salmonella typhimurium (strain LT2 / SGSC1412 / ATCC 700720)).